Reading from the N-terminus, the 192-residue chain is uncharacterized protein (192 aa).

The protein to M.thermoautotrophicum MTH863.

This is an uncharacterized protein from Methanocaldococcus jannaschii (strain ATCC 43067 / DSM 2661 / JAL-1 / JCM 10045 / NBRC 100440) (Methanococcus jannaschii).